A 64-amino-acid chain; its full sequence is Large ribosomal subunit protein bL35 (64 aa).

Disordered regions lie at residues 1–22 (MPKAKTHSGASKRFRRTGTGKI) and 34–64 (EHKPTTRTRRLEGRTTVSANDTKRVNSLLNG). Basic and acidic residues predominate over residues 34-46 (EHKPTTRTRRLEG). The segment covering 50-64 (VSANDTKRVNSLLNG) has biased composition (polar residues).

It belongs to the bacterial ribosomal protein bL35 family.

The sequence is that of Large ribosomal subunit protein bL35 from Mycolicibacterium paratuberculosis (strain ATCC BAA-968 / K-10) (Mycobacterium paratuberculosis).